A 546-amino-acid polypeptide reads, in one-letter code: Probable Xaa-Pro aminopeptidase pepP (546 aa).

Aspartate 341, aspartate 352, glutamate 475, and glutamate 515 together coordinate Mn(2+).

This sequence belongs to the peptidase M24B family. Requires Mn(2+) as cofactor.

It catalyses the reaction Release of any N-terminal amino acid, including proline, that is linked to proline, even from a dipeptide or tripeptide.. Functionally, catalyzes the removal of a penultimate prolyl residue from the N-termini of peptides. The sequence is that of Probable Xaa-Pro aminopeptidase pepP (pepP) from Sclerotinia sclerotiorum (strain ATCC 18683 / 1980 / Ss-1) (White mold).